A 308-amino-acid chain; its full sequence is Ribosomal RNA large subunit methyltransferase F (308 aa).

The protein belongs to the methyltransferase superfamily. METTL16/RlmF family.

It is found in the cytoplasm. The enzyme catalyses adenosine(1618) in 23S rRNA + S-adenosyl-L-methionine = N(6)-methyladenosine(1618) in 23S rRNA + S-adenosyl-L-homocysteine + H(+). Functionally, specifically methylates the adenine in position 1618 of 23S rRNA. The sequence is that of Ribosomal RNA large subunit methyltransferase F from Shigella dysenteriae serotype 1 (strain Sd197).